A 178-amino-acid chain; its full sequence is Crossover junction endodeoxyribonuclease RuvC (178 aa).

Catalysis depends on residues Asp-8, Glu-72, and Asp-144. Residues Asp-8, Glu-72, and Asp-144 each contribute to the Mg(2+) site.

Belongs to the RuvC family. In terms of assembly, homodimer which binds Holliday junction (HJ) DNA. The HJ becomes 2-fold symmetrical on binding to RuvC with unstacked arms; it has a different conformation from HJ DNA in complex with RuvA. In the full resolvosome a probable DNA-RuvA(4)-RuvB(12)-RuvC(2) complex forms which resolves the HJ. The cofactor is Mg(2+).

The protein resides in the cytoplasm. The enzyme catalyses Endonucleolytic cleavage at a junction such as a reciprocal single-stranded crossover between two homologous DNA duplexes (Holliday junction).. In terms of biological role, the RuvA-RuvB-RuvC complex processes Holliday junction (HJ) DNA during genetic recombination and DNA repair. Endonuclease that resolves HJ intermediates. Cleaves cruciform DNA by making single-stranded nicks across the HJ at symmetrical positions within the homologous arms, yielding a 5'-phosphate and a 3'-hydroxyl group; requires a central core of homology in the junction. The consensus cleavage sequence is 5'-(A/T)TT(C/G)-3'. Cleavage occurs on the 3'-side of the TT dinucleotide at the point of strand exchange. HJ branch migration catalyzed by RuvA-RuvB allows RuvC to scan DNA until it finds its consensus sequence, where it cleaves and resolves the cruciform DNA. The polypeptide is Crossover junction endodeoxyribonuclease RuvC (Idiomarina loihiensis (strain ATCC BAA-735 / DSM 15497 / L2-TR)).